A 508-amino-acid polypeptide reads, in one-letter code: BICD family-like cargo adapter 2 (508 aa).

Positions M1–G22 are enriched in low complexity. Disordered regions lie at residues M1–F27, L132–E152, and A300–S351. 2 coiled-coil regions span residues A64–A300 and A353–V458. Residues Q135–A149 are compositionally biased toward basic and acidic residues. The tract at residues K470–R491 is disordered. Over residues S473–S489 the composition is skewed to low complexity.

This sequence belongs to the BICDR family. Interacts with RAB13.

In Homo sapiens (Human), this protein is BICD family-like cargo adapter 2 (BICDL2).